The primary structure comprises 403 residues: CCA-adding enzyme (403 aa).

Positions 32 and 35 each coordinate ATP. The CTP site is built by G32 and R35. Residues D45 and D47 each coordinate Mg(2+). The ATP site is built by R116, D159, R162, R165, and R168. Residues R116, D159, R162, R165, and R168 each coordinate CTP.

This sequence belongs to the tRNA nucleotidyltransferase/poly(A) polymerase family. Bacterial CCA-adding enzyme type 3 subfamily. In terms of assembly, homodimer. Mg(2+) is required as a cofactor.

It carries out the reaction a tRNA precursor + 2 CTP + ATP = a tRNA with a 3' CCA end + 3 diphosphate. The catalysed reaction is a tRNA with a 3' CCA end + 2 CTP + ATP = a tRNA with a 3' CCACCA end + 3 diphosphate. Its function is as follows. Catalyzes the addition and repair of the essential 3'-terminal CCA sequence in tRNAs without using a nucleic acid template. Adds these three nucleotides in the order of C, C, and A to the tRNA nucleotide-73, using CTP and ATP as substrates and producing inorganic pyrophosphate. tRNA 3'-terminal CCA addition is required both for tRNA processing and repair. Also involved in tRNA surveillance by mediating tandem CCA addition to generate a CCACCA at the 3' terminus of unstable tRNAs. While stable tRNAs receive only 3'-terminal CCA, unstable tRNAs are marked with CCACCA and rapidly degraded. The polypeptide is CCA-adding enzyme (Limosilactobacillus reuteri (strain DSM 20016) (Lactobacillus reuteri)).